A 66-amino-acid polypeptide reads, in one-letter code: Large ribosomal subunit protein bL35 (66 aa).

The segment covering 18–27 (ATGKIKSTQS) has biased composition (polar residues). Residues 18–41 (ATGKIKSTQSAKRHGMTKRSKRSI) form a disordered region. A compositionally biased stretch (basic residues) spans 28–41 (AKRHGMTKRSKRSI).

It belongs to the bacterial ribosomal protein bL35 family.

The sequence is that of Large ribosomal subunit protein bL35 from Ehrlichia ruminantium (strain Gardel).